The chain runs to 334 residues: MTAKLKLLDEDGIYEHLFERYSLLQKHANELKQDLGIVSRSSGDLEVSFEPQPGSHVKEHFNFEIAQSLSSLNSSRDNNNSTTGYVVWSTTPFFLQWLLYSPSGAIFGKGGTIEVEGDASHSAYELPAIFGSRTVDTDESSDVPAAPQHIIVELGAGIAGMLCVALANYVDKYVCTDQKGLLNGLKRNIKHNIDELRLRNMESSTLDFEISRRTALKTELDVLDLDWESFGLKSSNFHTLITPAGPSTVCILSMDVVYNEFLIAPYLRTLKKLLQTYEKSGNTSFAILGIQLRDQDVVEMFLSTAVVQFELKVCAIVDSEIDKTRFGLYYITTQ.

Residues Trp-88, 155 to 157 (GAG), Asp-177, Trp-227, and Met-254 contribute to the S-adenosyl-L-methionine site.

It belongs to the class I-like SAM-binding methyltransferase superfamily. RKM5 family.

Its function is as follows. S-adenosyl-L-methionine-dependent protein-lysine N-methyltransferase that methylates 60S ribosomal protein L1. This Lachancea thermotolerans (strain ATCC 56472 / CBS 6340 / NRRL Y-8284) (Yeast) protein is Ribosomal lysine N-methyltransferase 5 (RKM5).